The sequence spans 373 residues: Beta sliding clamp (373 aa).

Belongs to the beta sliding clamp family. In terms of assembly, forms a ring-shaped head-to-tail homodimer around DNA which binds and tethers DNA polymerases and other proteins to the DNA. The DNA replisome complex has a single clamp-loading complex (3 tau and 1 each of delta, delta', psi and chi subunits) which binds 3 Pol III cores (1 core on the leading strand and 2 on the lagging strand) each with a beta sliding clamp dimer. Additional proteins in the replisome are other copies of gamma, psi and chi, Ssb, DNA helicase and RNA primase.

The protein resides in the cytoplasm. Functionally, confers DNA tethering and processivity to DNA polymerases and other proteins. Acts as a clamp, forming a ring around DNA (a reaction catalyzed by the clamp-loading complex) which diffuses in an ATP-independent manner freely and bidirectionally along dsDNA. Initially characterized for its ability to contact the catalytic subunit of DNA polymerase III (Pol III), a complex, multichain enzyme responsible for most of the replicative synthesis in bacteria; Pol III exhibits 3'-5' exonuclease proofreading activity. The beta chain is required for initiation of replication as well as for processivity of DNA replication. The sequence is that of Beta sliding clamp (dnaN) from Mycoplasmopsis pulmonis (strain UAB CTIP) (Mycoplasma pulmonis).